The primary structure comprises 778 residues: Double zinc ribbon and ankyrin repeat-containing protein 1 (778 aa).

Phosphoserine occurs at positions 179 and 201. 2 consecutive DZANK-type zinc fingers follow at residues 230 to 289 (CAHC…CVVC) and 359 to 407 (CSRC…GSCG). ANK repeat units follow at residues 631-662 (ENKL…DPNC) and 666-695 (QGRP…DIDQ). Serine 768 bears the Phosphoserine mark.

As to quaternary structure, interacts with NINL. Associates with DYNC1H1 and multiple dynein intermediate and light chains as well as actin-binding proteins.

The protein resides in the cytoplasm. It is found in the cytoskeleton. Its subcellular location is the microtubule organizing center. It localises to the centrosome. The protein localises to the cilium basal body. In terms of biological role, involved in vesicle transport in photoreceptor cells. The protein is Double zinc ribbon and ankyrin repeat-containing protein 1 (Dzank1) of Mus musculus (Mouse).